Here is a 530-residue protein sequence, read N- to C-terminus: Arginine--tRNA ligase (530 aa).

The short motif at 113-123 (ANPTGPLHIGH) is the 'HIGH' region element.

This sequence belongs to the class-I aminoacyl-tRNA synthetase family. Monomer.

It localises to the cytoplasm. It carries out the reaction tRNA(Arg) + L-arginine + ATP = L-arginyl-tRNA(Arg) + AMP + diphosphate. The protein is Arginine--tRNA ligase of Campylobacter jejuni subsp. jejuni serotype O:23/36 (strain 81-176).